We begin with the raw amino-acid sequence, 617 residues long: Dihydroxy-acid dehydratase (617 aa).

Asp81 is a Mg(2+) binding site. A [2Fe-2S] cluster-binding site is contributed by Cys122. Residues Asp123 and Lys124 each coordinate Mg(2+). Position 124 is an N6-carboxylysine (Lys124). A [2Fe-2S] cluster-binding site is contributed by Cys197. Residue Glu494 coordinates Mg(2+). Ser520 (proton acceptor) is an active-site residue.

Belongs to the IlvD/Edd family. Homodimer. [2Fe-2S] cluster serves as cofactor. The cofactor is Mg(2+).

It catalyses the reaction (2R)-2,3-dihydroxy-3-methylbutanoate = 3-methyl-2-oxobutanoate + H2O. The catalysed reaction is (2R,3R)-2,3-dihydroxy-3-methylpentanoate = (S)-3-methyl-2-oxopentanoate + H2O. Its pathway is amino-acid biosynthesis; L-isoleucine biosynthesis; L-isoleucine from 2-oxobutanoate: step 3/4. It participates in amino-acid biosynthesis; L-valine biosynthesis; L-valine from pyruvate: step 3/4. Functions in the biosynthesis of branched-chain amino acids. Catalyzes the dehydration of (2R,3R)-2,3-dihydroxy-3-methylpentanoate (2,3-dihydroxy-3-methylvalerate) into 2-oxo-3-methylpentanoate (2-oxo-3-methylvalerate) and of (2R)-2,3-dihydroxy-3-methylbutanoate (2,3-dihydroxyisovalerate) into 2-oxo-3-methylbutanoate (2-oxoisovalerate), the penultimate precursor to L-isoleucine and L-valine, respectively. This chain is Dihydroxy-acid dehydratase, found in Parafrankia sp. (strain EAN1pec).